Here is a 179-residue protein sequence, read N- to C-terminus: ATP-dependent protease subunit HslV (179 aa).

Thr6 is a catalytic residue. The Na(+) site is built by Ser164, Cys167, and Thr170.

The protein belongs to the peptidase T1B family. HslV subfamily. In terms of assembly, a double ring-shaped homohexamer of HslV is capped on each side by a ring-shaped HslU homohexamer. The assembly of the HslU/HslV complex is dependent on binding of ATP.

It localises to the cytoplasm. It catalyses the reaction ATP-dependent cleavage of peptide bonds with broad specificity.. Allosterically activated by HslU binding. Functionally, protease subunit of a proteasome-like degradation complex believed to be a general protein degrading machinery. The sequence is that of ATP-dependent protease subunit HslV from Listeria monocytogenes serotype 4b (strain CLIP80459).